A 141-amino-acid polypeptide reads, in one-letter code: Nucleoside diphosphate kinase (141 aa).

Residues Lys11, Phe59, Arg87, Thr93, Arg104, and Asn114 each coordinate ATP. His117 functions as the Pros-phosphohistidine intermediate in the catalytic mechanism.

The protein belongs to the NDK family. Homotetramer. Mg(2+) serves as cofactor.

The protein resides in the cytoplasm. It catalyses the reaction a 2'-deoxyribonucleoside 5'-diphosphate + ATP = a 2'-deoxyribonucleoside 5'-triphosphate + ADP. The catalysed reaction is a ribonucleoside 5'-diphosphate + ATP = a ribonucleoside 5'-triphosphate + ADP. Its function is as follows. Major role in the synthesis of nucleoside triphosphates other than ATP. The ATP gamma phosphate is transferred to the NDP beta phosphate via a ping-pong mechanism, using a phosphorylated active-site intermediate. This is Nucleoside diphosphate kinase from Burkholderia cenocepacia (strain HI2424).